A 223-amino-acid polypeptide reads, in one-letter code: Deoxyribose-phosphate aldolase (223 aa).

The active-site Proton donor/acceptor is the aspartate 92. Residue lysine 154 is the Schiff-base intermediate with acetaldehyde of the active site. Residue lysine 182 is the Proton donor/acceptor of the active site.

The protein belongs to the DeoC/FbaB aldolase family. DeoC type 1 subfamily.

It is found in the cytoplasm. The catalysed reaction is 2-deoxy-D-ribose 5-phosphate = D-glyceraldehyde 3-phosphate + acetaldehyde. The protein operates within carbohydrate degradation; 2-deoxy-D-ribose 1-phosphate degradation; D-glyceraldehyde 3-phosphate and acetaldehyde from 2-deoxy-alpha-D-ribose 1-phosphate: step 2/2. Functionally, catalyzes a reversible aldol reaction between acetaldehyde and D-glyceraldehyde 3-phosphate to generate 2-deoxy-D-ribose 5-phosphate. The protein is Deoxyribose-phosphate aldolase of Haemophilus influenzae (strain PittEE).